We begin with the raw amino-acid sequence, 101 residues long: NADH-quinone oxidoreductase subunit K (101 aa).

3 helical membrane passes run L5–L25, L29–G49, and V62–V82.

The protein belongs to the complex I subunit 4L family. In terms of assembly, NDH-1 is composed of 14 different subunits. Subunits NuoA, H, J, K, L, M, N constitute the membrane sector of the complex.

The protein localises to the cell inner membrane. The enzyme catalyses a quinone + NADH + 5 H(+)(in) = a quinol + NAD(+) + 4 H(+)(out). Its function is as follows. NDH-1 shuttles electrons from NADH, via FMN and iron-sulfur (Fe-S) centers, to quinones in the respiratory chain. The immediate electron acceptor for the enzyme in this species is believed to be ubiquinone. Couples the redox reaction to proton translocation (for every two electrons transferred, four hydrogen ions are translocated across the cytoplasmic membrane), and thus conserves the redox energy in a proton gradient. This is NADH-quinone oxidoreductase subunit K from Syntrophotalea carbinolica (strain DSM 2380 / NBRC 103641 / GraBd1) (Pelobacter carbinolicus).